The following is a 283-amino-acid chain: Prolyl 4-hydroxylase 1 (283 aa).

Topologically, residues 1 to 6 are cytoplasmic; the sequence is MAPAMK. The helical; Signal-anchor for type II membrane protein transmembrane segment at 7–27 threads the bilayer; sequence IVFGLLTFVTVGMVIGSLLQL. The Lumenal segment spans residues 28–283; the sequence is AFINRLEDSY…TKWMRQKATS (256 aa). A Fe2OG dioxygenase domain is found at 162-279; the sequence is NGELIQVLRY…KWSATKWMRQ (118 aa). Residues His-180, Asp-182, and His-260 each coordinate Fe cation. 2-oxoglutarate is bound at residue Lys-270.

The protein belongs to the P4HA family. The cofactor is Fe(2+). L-ascorbate is required as a cofactor.

It is found in the endoplasmic reticulum membrane. The enzyme catalyses L-prolyl-[collagen] + 2-oxoglutarate + O2 = trans-4-hydroxy-L-prolyl-[collagen] + succinate + CO2. Its function is as follows. Catalyzes the post-translational formation of 4-hydroxyproline in -Xaa-Pro-Gly- sequences in proline-rich peptide sequences of plant glycoproteins and other proteins. Hydroxylates preferentially prolines in second positions in the -Pro-Pro-Gly-triplets. Hydroxyprolines are important constituent of many plant cell wall glycoproteins such as extensins, hydroxyproline-rich glycoproteins, lectins and arabinogalactan proteins. Can hydroxylate collagen-like peptides and hypoxia-inducible transcription factor peptides. This Arabidopsis thaliana (Mouse-ear cress) protein is Prolyl 4-hydroxylase 1.